We begin with the raw amino-acid sequence, 172 residues long: Adenine phosphoribosyltransferase (172 aa).

This sequence belongs to the purine/pyrimidine phosphoribosyltransferase family. Homodimer.

The protein resides in the cytoplasm. The enzyme catalyses AMP + diphosphate = 5-phospho-alpha-D-ribose 1-diphosphate + adenine. Its pathway is purine metabolism; AMP biosynthesis via salvage pathway; AMP from adenine: step 1/1. Its function is as follows. Catalyzes a salvage reaction resulting in the formation of AMP, that is energically less costly than de novo synthesis. This Crocosphaera subtropica (strain ATCC 51142 / BH68) (Cyanothece sp. (strain ATCC 51142)) protein is Adenine phosphoribosyltransferase.